The chain runs to 495 residues: Telomere-binding protein subunit alpha (495 aa).

The span at 1–13 (MSTAAKQNRSTSR) shows a compositional bias: polar residues. Residues 1–31 (MSTAAKQNRSTSRVSKKKTAAPKEGAAKKSD) form a disordered region.

The protein belongs to the telombin family. Heterodimer of an alpha and a beta subunit.

It is found in the nucleus. Its subcellular location is the chromosome. The protein resides in the telomere. In terms of biological role, may function as protective capping of the single-stranded telomeric overhang. May also participate in telomere length regulation during DNA replication. Binds specifically to the T4G4-containing extension on the 3'strand and protects this region of the telomere from nuclease digestion and chemical modification. In Sterkiella nova (Ciliate), this protein is Telomere-binding protein subunit alpha (MAC-56A).